Here is a 700-residue protein sequence, read N- to C-terminus: Mitosis inducer protein blt1 (700 aa).

Composition is skewed to polar residues over residues 1-11 (MSKSAFTSKSQ) and 43-53 (PRSTALPNLSN). Disordered stretches follow at residues 1–53 (MSKS…NLSN) and 266–293 (TNNR…SKDQ). Residues 273–284 (GSDGSNSNFNGG) show a composition bias toward low complexity. Residues 496–575 (SVALDDHNRQ…LNMLQKLSMQ (80 aa)) are a coiled coil. Disordered stretches follow at residues 634 to 659 (FSSF…RKPS) and 671 to 700 (SSGS…SSKM). Serine 636 is modified (phosphoserine).

Interacts with cdr2, mid1 and sad1.

The protein resides in the cytoplasm. It is found in the cytoskeleton. Functionally, at the onset of mitosis, forms a medial ring structure before the arrangement of the medial actin ring. Essential for the central positioning of the division septum before the cell divides. The protein is Mitosis inducer protein blt1 (blt1) of Schizosaccharomyces pombe (strain 972 / ATCC 24843) (Fission yeast).